The chain runs to 892 residues: Major core protein OPG136 precursor (892 aa).

Positions 616–698 (SPEGEETIIC…ILDRIITNAG (83 aa)) are excised as a propeptide.

The protein belongs to the orthopxvirus protein OPG136 family. In terms of assembly, interacts with P39/A4. The precursor is cleaved by OPG083 to give rise to the 62 kDa mature protein during virion maturation. Proteolytic cleavage of major core proteins OPG136, OPG129, and OPG098, which occurs at a late stage of core formation, is required for production of infectious mature virions (MV).

The protein resides in the virion. Core protein 4a is the most abundant virion protein. Major component of the virion core that undergoes proteolytic processing during the immature virion (IV) to mature virion (MV) transition. This is Major core protein OPG136 precursor (OPG136) from Homo sapiens (Human).